Reading from the N-terminus, the 500-residue chain is Lysine--tRNA ligase (500 aa).

2 residues coordinate Mg(2+): glutamate 410 and glutamate 417.

This sequence belongs to the class-II aminoacyl-tRNA synthetase family. Homodimer. Mg(2+) is required as a cofactor.

It localises to the cytoplasm. It catalyses the reaction tRNA(Lys) + L-lysine + ATP = L-lysyl-tRNA(Lys) + AMP + diphosphate. This Mycoplasma capricolum subsp. capricolum (strain California kid / ATCC 27343 / NCTC 10154) protein is Lysine--tRNA ligase.